The primary structure comprises 387 residues: Lymphocyte transmembrane adapter 1 (387 aa).

Over 1–37 (MDVTTSAWSETTRRISEPSTLQGTLGSLDKAEDHSSS) the chain is Extracellular. The chain crosses the membrane as a helical; Signal-anchor for type III membrane protein span at residues 38-58 (IFSGFAALLAILLVVAVICVL). Over 59-387 (WCCGKRKKRQ…VCAAEAGARG (329 aa)) the chain is Cytoplasmic. The segment at 114-136 (VSTESLLSRNSDSPSSEHVPSRA) is disordered. The span at 118 to 129 (SLLSRNSDSPSS) shows a compositional bias: low complexity. Position 195 is a phosphotyrosine (Y195). Residues 230–268 (SEEIDEGCGNASDCTSLGSPGTENSDPLSDGEGSSQTSN) form a disordered region. Positions 241 to 268 (SDCTSLGSPGTENSDPLSDGEGSSQTSN) are enriched in polar residues. Y270 and Y296 each carry phosphotyrosine. The disordered stretch occupies residues 294–387 (RDYENVPPGP…VCAAEAGARG (94 aa)). Over residues 319 to 329 (DHVEGRTDGPE) the composition is skewed to basic and acidic residues. A compositionally biased stretch (acidic residues) spans 360 to 369 (PWEDAEETSS). A Phosphotyrosine modification is found at Y375.

In terms of assembly, when phosphorylated, interacts with GRB2, PIK3R1 and GRAP2. Post-translationally, phosphorylated on tyrosines upon TCR or BCR activation; which leads to the recruitment of GRB2, PIK3R1 and GRAP2.

The protein resides in the cell membrane. Negatively regulates TCR (T-cell antigen receptor)-mediated signaling in T-cells and BCR (B-cell antigen receptor)-mediated signaling in B-cells. The sequence is that of Lymphocyte transmembrane adapter 1 (LAX1) from Bos taurus (Bovine).